A 316-amino-acid polypeptide reads, in one-letter code: Pantothenate kinase (316 aa).

Residue 95–102 participates in ATP binding; the sequence is GSVAVGKS.

It belongs to the prokaryotic pantothenate kinase family.

It localises to the cytoplasm. The enzyme catalyses (R)-pantothenate + ATP = (R)-4'-phosphopantothenate + ADP + H(+). It functions in the pathway cofactor biosynthesis; coenzyme A biosynthesis; CoA from (R)-pantothenate: step 1/5. This Photorhabdus laumondii subsp. laumondii (strain DSM 15139 / CIP 105565 / TT01) (Photorhabdus luminescens subsp. laumondii) protein is Pantothenate kinase.